The sequence spans 407 residues: MLLSVTSRPGISTFGYNKNNKKPYVSLSQQMAPPSPSSSTPNSSSGSTAHDQLSKTNLYIRGLQPSTTDQDLVKLCQSYGKIVSTKAILDKTTNKCKGYGFVDFDSPSAAQKAVTALKASGVQAQMAKQQEQDPTNLYISNLPLSMDEQELEGMLKPFGQVISTRILRDTSGTSRGVGFARMESTEKCEAIITHFNGKYIKTPPGVPAPSDPLLCKFADGGPKKRQNQGKFVQNGRAWPRNGDMGGMALTYDPSTALQNGFYPAPYNLAPNRMLTQSALSPYLPSPMTSYQRVTQTSPLQAPSPSWMHHQSYLMQPSGSVLTPGMDHPISLQPASMVGPLTQQLGHLSLSSTGTYVPTAAAMQGAYLSQYTPVPSSSVSVEESGSQQSQVPVDAPSEHGVYSFQFNK.

M1 carries the N-acetylmethionine modification. The disordered stretch occupies residues 14–51; that stretch reads FGYNKNNKKPYVSLSQQMAPPSPSSSTPNSSSGSTAHD. Low complexity predominate over residues 37-47; it reads SSSTPNSSSGS. RRM domains lie at 56–129 and 135–220; these read TNLY…MAKQ and TNLY…FADG. S106 is modified (phosphoserine). 2 positions are modified to phosphoserine: S280 and S285. Low complexity predominate over residues 374-392; sequence PSSSVSVEESGSQQSQVPV. Positions 374-398 are disordered; the sequence is PSSSVSVEESGSQQSQVPVDAPSEH.

Its subcellular location is the nucleus. This Bos taurus (Bovine) protein is RNA-binding motif, single-stranded-interacting protein 2 (RBMS2).